An 863-amino-acid polypeptide reads, in one-letter code: Paramyosin (863 aa).

Residues 1–18 (MSESHVKISRTIIRGTSP) form a nonhelical region region. Positions 19–836 (STVRLESRVR…ERTITIKRTI (818 aa)) form a coiled coil. The nonhelical region stretch occupies residues 837 to 863 (GGPGSRAVSVVREINSVSRGNRATSIM).

This sequence belongs to the paramyosin family. In terms of assembly, homodimer.

The protein resides in the cytoplasm. Its subcellular location is the myofibril. In terms of biological role, paramyosin is a major structural component of many thick filaments isolated from invertebrate muscles. In Taenia saginata (Beef tapeworm), this protein is Paramyosin (PMY).